A 292-amino-acid polypeptide reads, in one-letter code: Undecaprenyl-diphosphatase (292 aa).

A run of 7 helical transmembrane segments spans residues 1-21 (MSLV…FLPV), 46-66 (FVTI…RADI), 90-110 (LGWY…LLEH), 114-134 (ALGN…LLAA), 192-212 (FLLS…STVP), 225-245 (VVGT…LLAW), and 253-273 (VFVV…LSGV).

It belongs to the UppP family.

The protein resides in the cell inner membrane. It catalyses the reaction di-trans,octa-cis-undecaprenyl diphosphate + H2O = di-trans,octa-cis-undecaprenyl phosphate + phosphate + H(+). In terms of biological role, catalyzes the dephosphorylation of undecaprenyl diphosphate (UPP). Confers resistance to bacitracin. This is Undecaprenyl-diphosphatase from Anaeromyxobacter dehalogenans (strain 2CP-1 / ATCC BAA-258).